The following is a 229-amino-acid chain: Putative N-acetylmannosamine-6-phosphate 2-epimerase 2 (229 aa).

The protein belongs to the NanE family.

The enzyme catalyses an N-acyl-D-glucosamine 6-phosphate = an N-acyl-D-mannosamine 6-phosphate. It participates in amino-sugar metabolism; N-acetylneuraminate degradation; D-fructose 6-phosphate from N-acetylneuraminate: step 3/5. In terms of biological role, converts N-acetylmannosamine-6-phosphate (ManNAc-6-P) to N-acetylglucosamine-6-phosphate (GlcNAc-6-P). This chain is Putative N-acetylmannosamine-6-phosphate 2-epimerase 2 (nanE2), found in Salmonella typhimurium (strain LT2 / SGSC1412 / ATCC 700720).